A 110-amino-acid chain; its full sequence is Large ribosomal subunit protein uL22 (110 aa).

Belongs to the universal ribosomal protein uL22 family. In terms of assembly, part of the 50S ribosomal subunit.

This protein binds specifically to 23S rRNA; its binding is stimulated by other ribosomal proteins, e.g. L4, L17, and L20. It is important during the early stages of 50S assembly. It makes multiple contacts with different domains of the 23S rRNA in the assembled 50S subunit and ribosome. In terms of biological role, the globular domain of the protein is located near the polypeptide exit tunnel on the outside of the subunit, while an extended beta-hairpin is found that lines the wall of the exit tunnel in the center of the 70S ribosome. In Buchnera aphidicola subsp. Acyrthosiphon pisum (strain 5A), this protein is Large ribosomal subunit protein uL22.